A 343-amino-acid polypeptide reads, in one-letter code: Small ribosomal subunit biogenesis GTPase RsgA (343 aa).

Residues 116–275 form the CP-type G domain; that stretch reads RGQLKPVAAN…LIDSPGIREF (160 aa). Residues 163-166 and 217-225 contribute to the GTP site; these read NKFD and GQSGVGKSS. Zn(2+)-binding residues include C299, C304, H306, and C312.

This sequence belongs to the TRAFAC class YlqF/YawG GTPase family. RsgA subfamily. In terms of assembly, monomer. Associates with 30S ribosomal subunit, binds 16S rRNA. It depends on Zn(2+) as a cofactor.

The protein resides in the cytoplasm. One of several proteins that assist in the late maturation steps of the functional core of the 30S ribosomal subunit. Helps release RbfA from mature subunits. May play a role in the assembly of ribosomal proteins into the subunit. Circularly permuted GTPase that catalyzes slow GTP hydrolysis, GTPase activity is stimulated by the 30S ribosomal subunit. This Pseudomonas fluorescens (strain Pf0-1) protein is Small ribosomal subunit biogenesis GTPase RsgA.